We begin with the raw amino-acid sequence, 246 residues long: uncharacterized protein (246 aa).

2 stretches are compositionally biased toward basic residues: residues 1 to 10 (MVWRFQKHIG) and 79 to 97 (TRRRGAGQRHCNQKPKAGR). A disordered region spans residues 1–184 (MVWRFQKHIG…LPPAHVPPTL (184 aa)). Positions 158-180 (PPFPPPPPPGDPTPPSPLPPAHV) are enriched in pro residues.

This is an uncharacterized protein from Homo sapiens (Human).